Here is a 292-residue protein sequence, read N- to C-terminus: Acetylglutamate kinase (292 aa).

Substrate-binding positions include 64-65 (GG), arginine 86, and asparagine 190.

It belongs to the acetylglutamate kinase family. ArgB subfamily.

Its subcellular location is the cytoplasm. The catalysed reaction is N-acetyl-L-glutamate + ATP = N-acetyl-L-glutamyl 5-phosphate + ADP. It participates in amino-acid biosynthesis; L-arginine biosynthesis; N(2)-acetyl-L-ornithine from L-glutamate: step 2/4. In terms of biological role, catalyzes the ATP-dependent phosphorylation of N-acetyl-L-glutamate. The protein is Acetylglutamate kinase of Leptospira biflexa serovar Patoc (strain Patoc 1 / Ames).